Consider the following 275-residue polypeptide: uncharacterized protein (275 aa).

An ABC transmembrane type-1 domain is found at 1-162 (NLFSVIVSLI…ITSYWTEVQR (162 aa)). Transmembrane regions (helical) follow at residues 21-41 (LYLV…GNIM), 106-126 (IMNL…YYLM), and 137-157 (FAYV…TSYW).

The protein resides in the cell membrane. This is an uncharacterized protein from Staphylococcus epidermidis.